A 217-amino-acid polypeptide reads, in one-letter code: Probable GTP-binding protein EngB (217 aa).

Positions 37–214 (AGVEVAFAGR…RAAMARLIGE (178 aa)) constitute an EngB-type G domain. Residues 45-52 (GRSNVGKS), 72-76 (GRTQE), 92-95 (DMPG), 159-162 (TKAD), and 193-195 (TSS) contribute to the GTP site. Residues Ser52 and Thr74 each contribute to the Mg(2+) site.

It belongs to the TRAFAC class TrmE-Era-EngA-EngB-Septin-like GTPase superfamily. EngB GTPase family. Mg(2+) is required as a cofactor.

Its function is as follows. Necessary for normal cell division and for the maintenance of normal septation. The protein is Probable GTP-binding protein EngB of Nitrobacter hamburgensis (strain DSM 10229 / NCIMB 13809 / X14).